The following is a 477-amino-acid chain: Inner membrane protein YbhI (477 aa).

Residues 1–5 (MNKKS) lie on the Cytoplasmic side of the membrane. The chain crosses the membrane as a helical span at residues 6–26 (LWKLILILAIPCIIGFMPAPA). Position 27 (Gly-27) is a topological domain, periplasmic. Residues 28 to 48 (LSELAWVLFGIYLAAIVGLVI) form a helical membrane-spanning segment. At 49–50 (KP) the chain is on the cytoplasmic side. Residues 51-71 (FPEPVVLLIAVAASMVVVGNL) traverse the membrane as a helical segment. Residues 72–87 (SDGAFKTTAVLSGYSS) lie on the Periplasmic side of the membrane. A helical transmembrane segment spans residues 88 to 108 (GTTWLVFSAFTLSAAFVTTGL). Residues 109 to 148 (GKRIAYLLIGKIGNTTLGLGYVTVFLDLVLAPATPSNTAR) are Cytoplasmic-facing. Residues 149–169 (AGGIVLPIINSVAVALGSEPE) traverse the membrane as a helical segment. Topologically, residues 170 to 219 (KSPRRVGHYLMMSIYMVTKTTSYMFFTAMAGNILALKMINDILHLQISWG) are periplasmic. The chain crosses the membrane as a helical span at residues 220–240 (GWALAAGLPGIIMLLVTPLVI). The Cytoplasmic portion of the chain corresponds to 241-272 (YTMYPPEIKKVDNKTIAKAGLAELGPMKIREK). Residues 273–293 (MLLGVFVLALLGWIFSKSLGV) traverse the membrane as a helical segment. The Periplasmic portion of the chain corresponds to 294 to 297 (DEST). The helical transmembrane segment at 298–318 (VAIVVMATMLLLGIVTWEDVV) threads the bilayer. Residues 319 to 356 (KNKGGWNTLIWYGGIIGLSSLLSKVKFFEWLAEVFKNN) are Cytoplasmic-facing. The chain crosses the membrane as a helical span at residues 357–377 (LAFDGHGNVAFFVIIFLSIIV). Arg-378 is a topological domain (periplasmic). The helical transmembrane segment at 379–399 (YFFASGSAYIVAMLPVFAMLA) threads the bilayer. Residues 400–445 (NVSGAPLMLTALALLFSNSYGGMVTHYGGAAGPVIFGVGYNDIKSW) are Cytoplasmic-facing. The helical transmembrane segment at 446-466 (WLVGAVLTILTFLVHITLGVW) threads the bilayer. Over 467–477 (WWNMLIGWNML) the chain is Periplasmic.

The protein belongs to the SLC13A/DASS transporter (TC 2.A.47) family. DIT1 subfamily.

Its subcellular location is the cell inner membrane. This is Inner membrane protein YbhI (ybhI) from Escherichia coli (strain K12).